We begin with the raw amino-acid sequence, 192 residues long: Phosphoheptose isomerase (192 aa).

The SIS domain maps to Leu-37 to Lys-192. Substrate is bound at residue Asn-52 to Gly-54. Zn(2+) is bound by residues His-61 and Glu-65. Substrate-binding positions include Glu-65, Asn-93–Asp-94, Ser-119–Ser-121, Ser-124, and Gln-172. The Zn(2+) site is built by Gln-172 and His-180.

This sequence belongs to the SIS family. GmhA subfamily. In terms of assembly, homotetramer. Zn(2+) serves as cofactor.

It is found in the cytoplasm. It catalyses the reaction 2 D-sedoheptulose 7-phosphate = D-glycero-alpha-D-manno-heptose 7-phosphate + D-glycero-beta-D-manno-heptose 7-phosphate. The protein operates within carbohydrate biosynthesis; D-glycero-D-manno-heptose 7-phosphate biosynthesis; D-glycero-alpha-D-manno-heptose 7-phosphate and D-glycero-beta-D-manno-heptose 7-phosphate from sedoheptulose 7-phosphate: step 1/1. Its function is as follows. Catalyzes the isomerization of sedoheptulose 7-phosphate in D-glycero-D-manno-heptose 7-phosphate. The sequence is that of Phosphoheptose isomerase from Escherichia fergusonii (strain ATCC 35469 / DSM 13698 / CCUG 18766 / IAM 14443 / JCM 21226 / LMG 7866 / NBRC 102419 / NCTC 12128 / CDC 0568-73).